A 245-amino-acid polypeptide reads, in one-letter code: Biosynthetic peptidoglycan transglycosylase (245 aa).

Residues 13–35 (VGLARWIVYAGSVFAGAWLATQL) traverse the membrane as a helical segment.

The protein belongs to the glycosyltransferase 51 family.

The protein resides in the cell inner membrane. It carries out the reaction [GlcNAc-(1-&gt;4)-Mur2Ac(oyl-L-Ala-gamma-D-Glu-L-Lys-D-Ala-D-Ala)](n)-di-trans,octa-cis-undecaprenyl diphosphate + beta-D-GlcNAc-(1-&gt;4)-Mur2Ac(oyl-L-Ala-gamma-D-Glu-L-Lys-D-Ala-D-Ala)-di-trans,octa-cis-undecaprenyl diphosphate = [GlcNAc-(1-&gt;4)-Mur2Ac(oyl-L-Ala-gamma-D-Glu-L-Lys-D-Ala-D-Ala)](n+1)-di-trans,octa-cis-undecaprenyl diphosphate + di-trans,octa-cis-undecaprenyl diphosphate + H(+). Its pathway is cell wall biogenesis; peptidoglycan biosynthesis. Its function is as follows. Peptidoglycan polymerase that catalyzes glycan chain elongation from lipid-linked precursors. This chain is Biosynthetic peptidoglycan transglycosylase, found in Burkholderia vietnamiensis (strain G4 / LMG 22486) (Burkholderia cepacia (strain R1808)).